A 666-amino-acid polypeptide reads, in one-letter code: uncharacterized protein (666 aa).

Positions 263–553 (RFDLTTLKTY…THFQMKAYLR (291 aa)) constitute an RNB domain.

The protein belongs to the RNR ribonuclease family.

This is an uncharacterized protein from Synechocystis sp. (strain ATCC 27184 / PCC 6803 / Kazusa).